The chain runs to 366 residues: Pectinesterase A (366 aa).

The first 24 residues, 1–24, serve as a signal peptide directing secretion; it reads MLKTISGTLALSLIIAASVHQAQA. The substrate site is built by T109 and Q153. D178 serves as the catalytic Proton donor. Cysteines 192 and 212 form a disulfide. The Nucleophile role is filled by D199. Substrate-binding residues include R219, N226, Y230, R267, W269, and T272.

Belongs to the pectinesterase family. In terms of assembly, monomer.

Its subcellular location is the secreted. The enzyme catalyses [(1-&gt;4)-alpha-D-galacturonosyl methyl ester](n) + n H2O = [(1-&gt;4)-alpha-D-galacturonosyl](n) + n methanol + n H(+). It functions in the pathway glycan metabolism; pectin degradation; 2-dehydro-3-deoxy-D-gluconate from pectin: step 1/5. In terms of biological role, catalyzes the first step in maceration and soft-rotting of plant tissue. In Dickeya dadantii (strain 3937) (Erwinia chrysanthemi (strain 3937)), this protein is Pectinesterase A.